A 241-amino-acid chain; its full sequence is Sugar fermentation stimulation protein homolog (241 aa).

Belongs to the SfsA family.

This is Sugar fermentation stimulation protein homolog from Yersinia enterocolitica serotype O:8 / biotype 1B (strain NCTC 13174 / 8081).